The chain runs to 253 residues: Triosephosphate isomerase (253 aa).

Residue 9-11 (NWK) coordinates substrate. The active-site Electrophile is the His-95. Residue Glu-167 is the Proton acceptor of the active site. Substrate contacts are provided by residues Gly-173, Ser-213, and 234–235 (GG). Phosphoserine is present on Ser-213.

It belongs to the triosephosphate isomerase family. As to quaternary structure, homodimer.

The protein resides in the cytoplasm. The catalysed reaction is D-glyceraldehyde 3-phosphate = dihydroxyacetone phosphate. It functions in the pathway carbohydrate biosynthesis; gluconeogenesis. Its pathway is carbohydrate degradation; glycolysis; D-glyceraldehyde 3-phosphate from glycerone phosphate: step 1/1. Involved in the gluconeogenesis. Catalyzes stereospecifically the conversion of dihydroxyacetone phosphate (DHAP) to D-glyceraldehyde-3-phosphate (G3P). The protein is Triosephosphate isomerase of Geobacillus kaustophilus (strain HTA426).